Here is a 321-residue protein sequence, read N- to C-terminus: Phospholipid phosphatase-related protein type 5 (321 aa).

Helical transmembrane passes span 6–26, 62–82, 122–142, 196–213, 225–245, and 252–272; these read VALI…TVML, AVPP…VIIV, FLGI…AGQV, AALS…ITST, VLCL…VAEY, and VIAG…CVVN.

Belongs to the PA-phosphatase related phosphoesterase family.

It localises to the cell membrane. Induces filopodia formation and promotes neurite growth in a CDC42-independent manner; impedes neurite growth inhibitory-mediated axonal retraction. The polypeptide is Phospholipid phosphatase-related protein type 5 (Mus musculus (Mouse)).